Consider the following 486-residue polypeptide: Mogroside I-E synthase (486 aa).

Positions 302, 360, 362, 380, 381, 382, 385, 401, and 402 each coordinate UDP-alpha-D-glucose.

This sequence belongs to the UDP-glycosyltransferase family. Highly expressed in young fruits 15 days after anthesis (15-DAA).

The enzyme catalyses mogrol + UDP-alpha-D-glucose = mogroside IE + UDP + H(+). It carries out the reaction mogroside I-A1 + UDP-alpha-D-glucose = mogroside IIE + UDP + H(+). It catalyses the reaction mogroside II-A1 + UDP-alpha-D-glucose = mogroside IIIX + UDP + H(+). The catalysed reaction is mogroside II-A + UDP-alpha-D-glucose = mogroside III + UDP + H(+). Its pathway is secondary metabolite biosynthesis; terpenoid biosynthesis. In terms of biological role, UDP-glycosyltransferase involved in the biosynthesis of cucurbitacin and mogroside tetracyclic triterpene natural products (e.g. siamenoside I and mogrosides IV, V and VI). Cucurbitacins have cytotoxic properties and exhibit deterrent taste as a defense barrier against herbivores. Mogrosides are nonsugar highly oxygenated compounds used as high-intensity zero-calorie sweeteners; they also possess pharmacological properties such as regulating immunity, lowering blood sugar and lipid levels, protecting the liver, and acting as antioxidants and antitumor agents. Catalyzes the C3 primary glucosylation of mogrol, mogroside I-A1, mogroside II-A1 and mogroside II-A. This is Mogroside I-E synthase from Siraitia grosvenorii (Monk's fruit).